The chain runs to 373 residues: MSDNSKTRVVVGMSGGVDSSVTALLLKEQGYDVIGIFMKNWDDTDENGVCTATEDYKDVVAVADQIGIPYYSVNFEKEYWDRVFEYFLAEYRAGRTPNPDVMCNKEIKFKAFLDYAMTLGADYVATGHYARVARDEDGTVHMLRGVDNGKDQTYFLSQLSQEQLQKTMFPLGHLEKPEVRRLAEEAGLATAKKKDSTGICFIGEKNFKNLLSNYLPAQPGRMMTVDGRDMGEHAGLMYYTIGQRGGLGIGGQHGGDNAPWFVVGKDLSKNILYVGQGFYHDSLMSTSLEASQVHFTREMPEEFTLECTAKFRYRQPDSKVTVHVKGDKAEVIFAEPQRAITPGQAVVFYDGEECLGGGLIDNAYRDGQVCQYI.

ATP-binding positions include 12-19 (GMSGGVDS) and Met38. The segment at 98–100 (NPD) is interaction with target base in tRNA. Cys103 (nucleophile) is an active-site residue. A disulfide bridge links Cys103 with Cys200. Residue Gly127 participates in ATP binding. Residues 150-152 (KDQ) form an interaction with tRNA region. Catalysis depends on Cys200, which acts as the Cysteine persulfide intermediate. The interval 312-313 (RY) is interaction with tRNA.

The protein belongs to the MnmA/TRMU family.

Its subcellular location is the cytoplasm. It catalyses the reaction S-sulfanyl-L-cysteinyl-[protein] + uridine(34) in tRNA + AH2 + ATP = 2-thiouridine(34) in tRNA + L-cysteinyl-[protein] + A + AMP + diphosphate + H(+). Functionally, catalyzes the 2-thiolation of uridine at the wobble position (U34) of tRNA, leading to the formation of s(2)U34. In Streptococcus pneumoniae (strain Hungary19A-6), this protein is tRNA-specific 2-thiouridylase MnmA.